The sequence spans 131 residues: Small ribosomal subunit protein uS8 (131 aa).

It belongs to the universal ribosomal protein uS8 family. Part of the 30S ribosomal subunit. Contacts proteins S5 and S12.

Functionally, one of the primary rRNA binding proteins, it binds directly to 16S rRNA central domain where it helps coordinate assembly of the platform of the 30S subunit. This chain is Small ribosomal subunit protein uS8, found in Paraburkholderia xenovorans (strain LB400).